The primary structure comprises 387 residues: Mannitol-1-phosphate 5-dehydrogenase (387 aa).

Position 3 to 14 (3 to 14 (ALHFGAGNIGRG)) interacts with NAD(+).

This sequence belongs to the mannitol dehydrogenase family.

The enzyme catalyses D-mannitol 1-phosphate + NAD(+) = beta-D-fructose 6-phosphate + NADH + H(+). This Yersinia pseudotuberculosis serotype O:1b (strain IP 31758) protein is Mannitol-1-phosphate 5-dehydrogenase.